The following is a 336-amino-acid chain: 4-hydroxy-3-methylbut-2-enyl diphosphate reductase (336 aa).

Cys21 serves as a coordination point for [4Fe-4S] cluster. Residues His50 and His86 each coordinate (2E)-4-hydroxy-3-methylbut-2-enyl diphosphate. Residues His50 and His86 each coordinate dimethylallyl diphosphate. Residues His50 and His86 each contribute to the isopentenyl diphosphate site. Cys108 is a binding site for [4Fe-4S] cluster. His136 contributes to the (2E)-4-hydroxy-3-methylbut-2-enyl diphosphate binding site. Residue His136 coordinates dimethylallyl diphosphate. An isopentenyl diphosphate-binding site is contributed by His136. Glu138 serves as the catalytic Proton donor. Thr177 is a binding site for (2E)-4-hydroxy-3-methylbut-2-enyl diphosphate. Cys207 is a [4Fe-4S] cluster binding site. Positions 235, 236, 237, and 280 each coordinate (2E)-4-hydroxy-3-methylbut-2-enyl diphosphate. Dimethylallyl diphosphate contacts are provided by Ser235, Ser236, Asn237, and Ser280. 4 residues coordinate isopentenyl diphosphate: Ser235, Ser236, Asn237, and Ser280.

It belongs to the IspH family. The cofactor is [4Fe-4S] cluster.

It carries out the reaction isopentenyl diphosphate + 2 oxidized [2Fe-2S]-[ferredoxin] + H2O = (2E)-4-hydroxy-3-methylbut-2-enyl diphosphate + 2 reduced [2Fe-2S]-[ferredoxin] + 2 H(+). It catalyses the reaction dimethylallyl diphosphate + 2 oxidized [2Fe-2S]-[ferredoxin] + H2O = (2E)-4-hydroxy-3-methylbut-2-enyl diphosphate + 2 reduced [2Fe-2S]-[ferredoxin] + 2 H(+). The protein operates within isoprenoid biosynthesis; dimethylallyl diphosphate biosynthesis; dimethylallyl diphosphate from (2E)-4-hydroxy-3-methylbutenyl diphosphate: step 1/1. It functions in the pathway isoprenoid biosynthesis; isopentenyl diphosphate biosynthesis via DXP pathway; isopentenyl diphosphate from 1-deoxy-D-xylulose 5-phosphate: step 6/6. Functionally, catalyzes the conversion of 1-hydroxy-2-methyl-2-(E)-butenyl 4-diphosphate (HMBPP) into a mixture of isopentenyl diphosphate (IPP) and dimethylallyl diphosphate (DMAPP). Acts in the terminal step of the DOXP/MEP pathway for isoprenoid precursor biosynthesis. This Mesorhizobium japonicum (strain LMG 29417 / CECT 9101 / MAFF 303099) (Mesorhizobium loti (strain MAFF 303099)) protein is 4-hydroxy-3-methylbut-2-enyl diphosphate reductase.